Reading from the N-terminus, the 621-residue chain is KIF-binding protein (621 aa).

The tract at residues 51–75 is disordered; it reads GPAPEDEDERPEAEDGPGAGDHALG. Acidic residues predominate over residues 54–65; it reads PEDEDERPEAED. At Ser-178 the chain carries Phosphoserine.

It belongs to the KIF-binding protein family. Interacts with KIF1B; positively regulates KIF1B microtubule motor activity. Interacts with STMN2. Highly expressed in heart, brain, ovary, testis, spinal cord and all specific brain regions examined. Moderate expressed at intermediate level in all other adult tissues examined, as well as in fetal liver and brain. Not expressed in blood leukocytes.

It is found in the cytoplasm. The protein resides in the cytoskeleton. Activator of KIF1B plus-end-directed microtubule motor activity. Required for organization of axonal microtubules, and axonal outgrowth and maintenance during peripheral and central nervous system development. This is KIF-binding protein from Homo sapiens (Human).